The primary structure comprises 297 residues: Halorhodopsin (297 aa).

Residues 1–31 are disordered; sequence MRSRTYHDQSVCGPYGSQRTDCDRDTDAGSD. The Extracellular segment spans residues 1–45; it reads MRSRTYHDQSVCGPYGSQRTDCDRDTDAGSDTDVHGAQVATQIRT. The chain crosses the membrane as a helical span at residues 46-71; the sequence is DTLLHSSLWVNIALAGLSILVFLYMA. Residues 72 to 77 lie on the Cytoplasmic side of the membrane; that stretch reads RTVRAN. Residues 78–101 form a helical membrane-spanning segment; the sequence is RARLIVGATLMIPLVSLSSYLGLV. Residues 102–125 are Extracellular-facing; it reads TGLTAGPIEMPAAHALAGEDVLSQ. The chain crosses the membrane as a helical span at residues 126–147; that stretch reads WGRYLTWTLSTPMILLALGWLA. The Cytoplasmic segment spans residues 148–150; the sequence is EVD. The helical transmembrane segment at 151 to 174 threads the bilayer; that stretch reads TADLFVVIAADIGMCLTGLAAALT. Residues 175 to 177 lie on the Extracellular side of the membrane; sequence TSS. A helical membrane pass occupies residues 178–200; sequence YAFRWAFYLVSTAFFVVVLYALL. Topologically, residues 201–212 are cytoplasmic; it reads AKWPTNAEAAGT. Residues 213–236 traverse the membrane as a helical segment; that stretch reads GDIFGTLRWLTVILWLGYPILWAL. Residues 237 to 246 lie on the Extracellular side of the membrane; the sequence is GVEGFALVDS. The chain crosses the membrane as a helical span at residues 247-275; that stretch reads VGLTSWGYSLLDIGAKYLFAALLLRWVAN. An N6-(retinylidene)lysine modification is found at lysine 262. The Cytoplasmic segment spans residues 276–297; sequence NERTIAVGQRSGRGAIGDPVED.

It belongs to the archaeal/bacterial/fungal opsin family.

The protein localises to the cell membrane. Its function is as follows. Light-driven chloride pump. The chain is Halorhodopsin (hop) from Haloterrigena sp. (strain arg-4).